Here is a 562-residue protein sequence, read N- to C-terminus: Endochitinase (562 aa).

The N-terminal stretch at 1–20 is a signal peptide; sequence MSLLYIILLFTQFLLLPTDA. The region spanning 27 to 311 is the GH18 domain; it reads TNIAVYWGQN…EILKNLLTSA (285 aa). E157 serves as the catalytic Proton donor. 2 disordered regions span residues 329–358 and 461–484; these read TSSA…SKVT and TLSP…SDST. Positions 481 to 562 are chitin-binding, high affinity; it reads SDSTARTLAK…NFSYLESNYF (82 aa). An N-linked (GlcNAc...) asparagine glycan is attached at N553.

It belongs to the glycosyl hydrolase 18 family. Chitinase class V subfamily. Post-translationally, extensively glycosylated with a series of short O-linked mannose oligosaccharides ranging in size from Man(2) to Man(5).

The protein localises to the secreted. The protein resides in the cell wall. The enzyme catalyses Random endo-hydrolysis of N-acetyl-beta-D-glucosaminide (1-&gt;4)-beta-linkages in chitin and chitodextrins.. Chitinase is required for cell separation during growth of S.cerevisiae. This chain is Endochitinase (CTS1), found in Saccharomyces cerevisiae (strain ATCC 204508 / S288c) (Baker's yeast).